Here is a 604-residue protein sequence, read N- to C-terminus: Acetylcholinesterase 4 (604 aa).

The signal sequence occupies residues 1–23 (MKPKLVFLPFLIFITVFIEESEA). The cysteines at positions 88 and 115 are disulfide-linked. Asn-96 and Asn-128 each carry an N-linked (GlcNAc...) asparagine glycan. Ser-219 acts as the Acyl-ester intermediate in catalysis. The cysteines at positions 273 and 284 are disulfide-linked. N-linked (GlcNAc...) asparagine glycosylation is found at Asn-274 and Asn-299. Glu-347 serves as the catalytic Charge relay system. N-linked (GlcNAc...) asparagine glycosylation is found at Asn-400 and Asn-446. The cysteines at positions 426 and 561 are disulfide-linked. His-477 functions as the Charge relay system in the catalytic mechanism.

The protein belongs to the type-B carboxylesterase/lipase family.

It is found in the synapse. The protein resides in the secreted. The protein localises to the cell membrane. The catalysed reaction is acetylcholine + H2O = choline + acetate + H(+). In terms of biological role, rapidly hydrolyzes choline released into the synapse. The protein is Acetylcholinesterase 4 (ace-4) of Caenorhabditis briggsae.